The chain runs to 147 residues: Small ribosomal subunit protein bS6 (147 aa).

The disordered stretch occupies residues 107–147 (KEGRERKARPARAERRDDTEAEDLSDEEGVEAEDFEEEQGV). A compositionally biased stretch (acidic residues) spans 125–147 (TEAEDLSDEEGVEAEDFEEEQGV).

This sequence belongs to the bacterial ribosomal protein bS6 family.

In terms of biological role, binds together with bS18 to 16S ribosomal RNA. The sequence is that of Small ribosomal subunit protein bS6 from Cellvibrio japonicus (strain Ueda107) (Pseudomonas fluorescens subsp. cellulosa).